A 24-amino-acid chain; its full sequence is L-amino-acid oxidase (24 aa).

Belongs to the flavin monoamine oxidase family. FIG1 subfamily. In terms of assembly, homodimer; non-covalently linked. The cofactor is FAD. In terms of processing, N-glycosylated. As to expression, expressed by the venom gland.

The protein resides in the secreted. The catalysed reaction is an L-alpha-amino acid + O2 + H2O = a 2-oxocarboxylate + H2O2 + NH4(+). Its function is as follows. Catalyzes an oxidative deamination of predominantly hydrophobic and aromatic L-amino acids, thus producing hydrogen peroxide that may contribute to the diverse toxic effects of this enzyme. Exhibits diverse biological activities, such as hemorrhage, hemolysis, edema, apoptosis, and antiparasitic activities. This protein has antibacterial activity (against E.coli, S.aureus, and B.dysenteriae), cytotoxic activity, as well as an ability to induce platelet aggregation. Effects of snake L-amino oxidases on platelets are controversial, since they either induce aggregation or inhibit agonist-induced aggregation. These different effects are probably due to different experimental conditions. This is L-amino-acid oxidase from Protobothrops mucrosquamatus (Taiwan habu).